A 141-amino-acid polypeptide reads, in one-letter code: uncharacterized protein (141 aa).

The HIT domain maps to 10–117 (IFCDIVQGSI…VPKYETGKGF (108 aa)). Positions 102–106 (HFHLH) match the Histidine triad motif motif.

This is an uncharacterized protein from Mycoplasma genitalium (strain ATCC 33530 / DSM 19775 / NCTC 10195 / G37) (Mycoplasmoides genitalium).